The following is a 316-amino-acid chain: Small ribosomal subunit protein RACK1 (316 aa).

WD repeat units follow at residues 4–46, 52–93, 94–135, 137–180, 181–221, 222–263, and 264–312; these read QMTL…WRLT, YGVP…WDLS, TGQT…WNTL, VCKY…WNLT, NCKL…LWDL, NEGK…WDLE, and GKVV…WQVS.

It belongs to the WD repeat G protein beta family. Ribosomal protein RACK1 subfamily.

This Biomphalaria glabrata (Bloodfluke planorb) protein is Small ribosomal subunit protein RACK1.